An 824-amino-acid polypeptide reads, in one-letter code: Leucine--tRNA ligase (824 aa).

The short motif at Pro-42–His-52 is the 'HIGH' region element. Positions Lys-581–Ser-585 match the 'KMSKS' region motif. Lys-584 contacts ATP.

This sequence belongs to the class-I aminoacyl-tRNA synthetase family.

The protein resides in the cytoplasm. It catalyses the reaction tRNA(Leu) + L-leucine + ATP = L-leucyl-tRNA(Leu) + AMP + diphosphate. The polypeptide is Leucine--tRNA ligase (Geobacter metallireducens (strain ATCC 53774 / DSM 7210 / GS-15)).